The chain runs to 350 residues: 5'-tyrosyl-DNA phosphodiesterase (350 aa).

Positions 113 to 117 (NIDGL) are interaction with 5' end of substrate DNA. Mg(2+) is bound by residues Asp-115 and Glu-145. The segment at 219 to 224 (HLESMR) is interaction with 5' end of substrate DNA. Asp-258 (proton donor/acceptor) is an active-site residue. The segment at 260–262 (NLR) is interaction with 5' end of substrate DNA.

This sequence belongs to the CCR4/nocturin family. TTRAP/TDP2 subfamily. The cofactor is Mg(2+). Mn(2+) is required as a cofactor.

It is found in the nucleus. The protein localises to the PML body. Its function is as follows. DNA repair enzyme that can remove a variety of covalent adducts from DNA through hydrolysis of a 5'-phosphodiester bond, giving rise to DNA with a free 5' phosphate. Catalyzes the hydrolysis of dead-end complexes between DNA and the topoisomerase 2 (top2) active site tyrosine residue. Hydrolyzes 5'-phosphoglycolates on protruding 5' ends on DNA double-strand breaks (DSBs) due to DNA damage by radiation and free radicals. The chain is 5'-tyrosyl-DNA phosphodiesterase from Caenorhabditis briggsae.